The sequence spans 250 residues: Ribosomal RNA small subunit methyltransferase J (250 aa).

Residues 101–102 (RD), 117–118 (ER), 153–154 (SS), and Asp-171 contribute to the S-adenosyl-L-methionine site.

This sequence belongs to the methyltransferase superfamily. RsmJ family.

It is found in the cytoplasm. The catalysed reaction is guanosine(1516) in 16S rRNA + S-adenosyl-L-methionine = N(2)-methylguanosine(1516) in 16S rRNA + S-adenosyl-L-homocysteine + H(+). Specifically methylates the guanosine in position 1516 of 16S rRNA. This Escherichia coli (strain SMS-3-5 / SECEC) protein is Ribosomal RNA small subunit methyltransferase J.